We begin with the raw amino-acid sequence, 109 residues long: Fluoride-specific ion channel FluC 1 (109 aa).

Transmembrane regions (helical) follow at residues 21-41, 52-72, and 84-104; these read LFINNNFIVSIIGSLLFGFFI, IILSGFFSCFTSFSGFIYFLY, and IIFCNLIIIINLLVMYFGFWI.

Belongs to the fluoride channel Fluc/FEX (TC 1.A.43) family.

The protein localises to the cell inner membrane. It catalyses the reaction fluoride(in) = fluoride(out). Fluoride-specific ion channel. Important for reducing fluoride concentration in the cell, thus reducing its toxicity. In Prochlorococcus marinus (strain MIT 9312), this protein is Fluoride-specific ion channel FluC 1.